Here is a 301-residue protein sequence, read N- to C-terminus: Probable actin-related protein 2/3 complex subunit 2 (301 aa).

This sequence belongs to the ARPC2 family. In terms of assembly, component of the Arp2/3 complex, at least composed of arx-1, arx-2, arx-4 and arx-6.

The protein resides in the cytoplasm. The protein localises to the cytoskeleton. Functions as actin-binding component of the Arp2/3 complex which is involved in regulation of actin polymerization and together with an activating nucleation-promoting factor (NPF) mediates the formation of branched actin networks. Seems to contact the mother actin filament. Plays a role in time-dependent memory loss and the retention of conditioned behavior over time. The chain is Probable actin-related protein 2/3 complex subunit 2 from Caenorhabditis elegans.